Consider the following 750-residue polypeptide: Meiosis protein mei2 (750 aa).

Residues 1–20 (MIMETESPLSITSPSPSDST) are disordered. A compositionally biased stretch (polar residues) spans 7-20 (SPLSITSPSPSDST). RRM domains are found at residues 195-270 (RYLF…FCQR) and 293-361 (LLLN…CLQV).

As to quaternary structure, binds rad24 when phosphorylated. In terms of processing, inactivated by phosphorylation by ran1/pat1.

Functionally, crucial for commitment to meiosis but it is not sufficient itself for the commitment. May be a splicing regulator. This chain is Meiosis protein mei2 (mei2), found in Schizosaccharomyces pombe (strain 972 / ATCC 24843) (Fission yeast).